The primary structure comprises 400 residues: Enoyl-[acyl-carrier-protein] reductase [NADH] (400 aa).

Residues 48 to 53, 74 to 75, 111 to 112, and 139 to 140 contribute to the NAD(+) site; these read GSSSGY, FE, DA, and LA. Position 225 (Tyr225) interacts with substrate. Catalysis depends on Tyr235, which acts as the Proton donor. NAD(+) contacts are provided by residues Lys244 and 273–275; that span reads VVT.

It belongs to the TER reductase family. In terms of assembly, monomer.

The catalysed reaction is a 2,3-saturated acyl-[ACP] + NAD(+) = a (2E)-enoyl-[ACP] + NADH + H(+). The protein operates within lipid metabolism; fatty acid biosynthesis. Functionally, involved in the final reduction of the elongation cycle of fatty acid synthesis (FAS II). Catalyzes the reduction of a carbon-carbon double bond in an enoyl moiety that is covalently linked to an acyl carrier protein (ACP). The chain is Enoyl-[acyl-carrier-protein] reductase [NADH] from Shewanella woodyi (strain ATCC 51908 / MS32).